The sequence spans 321 residues: Anthranilate phosphoribosyltransferase (321 aa).

5-phospho-alpha-D-ribose 1-diphosphate is bound by residues glycine 72, 75 to 76 (GD), threonine 80, 82 to 85 (NVST), 99 to 107 (KHGNVSVTS), and serine 111. Glycine 72 provides a ligand contact to anthranilate. Serine 84 contacts Mg(2+). Asparagine 102 is an anthranilate binding site. Residue arginine 157 coordinates anthranilate. Residues aspartate 216 and glutamate 217 each coordinate Mg(2+).

It belongs to the anthranilate phosphoribosyltransferase family. Homodimer. It depends on Mg(2+) as a cofactor.

It carries out the reaction N-(5-phospho-beta-D-ribosyl)anthranilate + diphosphate = 5-phospho-alpha-D-ribose 1-diphosphate + anthranilate. It functions in the pathway amino-acid biosynthesis; L-tryptophan biosynthesis; L-tryptophan from chorismate: step 2/5. Catalyzes the transfer of the phosphoribosyl group of 5-phosphorylribose-1-pyrophosphate (PRPP) to anthranilate to yield N-(5'-phosphoribosyl)-anthranilate (PRA). The sequence is that of Anthranilate phosphoribosyltransferase from Methanococcus vannielii (strain ATCC 35089 / DSM 1224 / JCM 13029 / OCM 148 / SB).